The following is a 508-amino-acid chain: Ribonuclease Y (508 aa).

The chain crosses the membrane as a helical span at residues Met1–Asn21. In terms of domain architecture, KH spans Thr198–Val283. The region spanning Val324–Ala417 is the HD domain.

Belongs to the RNase Y family.

Its subcellular location is the cell membrane. In terms of biological role, endoribonuclease that initiates mRNA decay. This chain is Ribonuclease Y, found in Thermotoga maritima (strain ATCC 43589 / DSM 3109 / JCM 10099 / NBRC 100826 / MSB8).